The following is a 507-amino-acid chain: Bifunctional purine biosynthesis protein PurH (507 aa).

Residues 1–144 (MKRALLSVSD…KNSDSVWAVV (144 aa)) enclose the MGS-like domain.

It belongs to the PurH family.

It catalyses the reaction (6R)-10-formyltetrahydrofolate + 5-amino-1-(5-phospho-beta-D-ribosyl)imidazole-4-carboxamide = 5-formamido-1-(5-phospho-D-ribosyl)imidazole-4-carboxamide + (6S)-5,6,7,8-tetrahydrofolate. The enzyme catalyses IMP + H2O = 5-formamido-1-(5-phospho-D-ribosyl)imidazole-4-carboxamide. Its pathway is purine metabolism; IMP biosynthesis via de novo pathway; 5-formamido-1-(5-phospho-D-ribosyl)imidazole-4-carboxamide from 5-amino-1-(5-phospho-D-ribosyl)imidazole-4-carboxamide (10-formyl THF route): step 1/1. The protein operates within purine metabolism; IMP biosynthesis via de novo pathway; IMP from 5-formamido-1-(5-phospho-D-ribosyl)imidazole-4-carboxamide: step 1/1. In Lacticaseibacillus casei (strain BL23) (Lactobacillus casei), this protein is Bifunctional purine biosynthesis protein PurH.